The sequence spans 522 residues: Wax ester synthase/diacylglycerol acyltransferase 4 (522 aa).

Positions 1–12 are enriched in basic and acidic residues; that stretch reads MEIETRPHISGD. Residues 1–20 form a disordered region; that stretch reads MEIETRPHISGDEKEEEQPL. Residues 1–205 lie on the Cytoplasmic side of the membrane; that stretch reads MEIETRPHIS…SDSRLLWLVK (205 aa). H149 serves as the catalytic Proton acceptor. A helical membrane pass occupies residues 206–226; the sequence is VIWTAVILGLNTVCDALEFIV. The Lumenal segment spans residues 227–522; that stretch reads TTLFVKDTET…QIAGLLYRML (296 aa). Residues N270 and N409 are each glycosylated (N-linked (GlcNAc...) asparagine).

It in the N-terminal section; belongs to the long-chain O-acyltransferase family. Mostly expressed in roots, flowers and siliques.

The protein localises to the cell membrane. It is found in the endoplasmic reticulum membrane. It carries out the reaction an acyl-CoA + a 1,2-diacyl-sn-glycerol = a triacyl-sn-glycerol + CoA. The catalysed reaction is a long chain fatty alcohol + a fatty acyl-CoA = a wax ester + CoA. The protein operates within glycerolipid metabolism; triacylglycerol biosynthesis. It functions in the pathway lipid metabolism. In terms of biological role, bifunctional wax ester synthase/diacylglycerol acyltransferase. Involved in cuticular wax biosynthesis. This is Wax ester synthase/diacylglycerol acyltransferase 4 from Arabidopsis thaliana (Mouse-ear cress).